A 377-amino-acid polypeptide reads, in one-letter code: Multiple sugar-binding transport ATP-binding protein MsmK (377 aa).

Residues 4 to 246 (LNLNHIYKKY…PANKFVAGFI (243 aa)) enclose the ABC transporter domain. 38 to 45 (GPSGCGKS) contributes to the ATP binding site.

This sequence belongs to the ABC transporter superfamily.

The protein localises to the cell membrane. In terms of biological role, involved in a binding protein-dependent transport system responsible for the uptake of melibiose, raffinose and isomaltotriose. Probably responsible for energy coupling to the transport system. The protein is Multiple sugar-binding transport ATP-binding protein MsmK (msmK) of Streptococcus mutans serotype c (strain ATCC 700610 / UA159).